A 292-amino-acid polypeptide reads, in one-letter code: Ribosomal RNA small subunit methyltransferase A (292 aa).

6 residues coordinate S-adenosyl-L-methionine: N28, L30, G55, E76, D101, and N126.

It belongs to the class I-like SAM-binding methyltransferase superfamily. rRNA adenine N(6)-methyltransferase family. RsmA subfamily.

It localises to the cytoplasm. It catalyses the reaction adenosine(1518)/adenosine(1519) in 16S rRNA + 4 S-adenosyl-L-methionine = N(6)-dimethyladenosine(1518)/N(6)-dimethyladenosine(1519) in 16S rRNA + 4 S-adenosyl-L-homocysteine + 4 H(+). Functionally, specifically dimethylates two adjacent adenosines (A1518 and A1519) in the loop of a conserved hairpin near the 3'-end of 16S rRNA in the 30S particle. May play a critical role in biogenesis of 30S subunits. In Bacillus cytotoxicus (strain DSM 22905 / CIP 110041 / 391-98 / NVH 391-98), this protein is Ribosomal RNA small subunit methyltransferase A.